The chain runs to 203 residues: ATP-dependent Clp protease proteolytic subunit 1 (203 aa).

Residue Ser101 is the Nucleophile of the active site. His126 is a catalytic residue.

Belongs to the peptidase S14 family. As to quaternary structure, fourteen ClpP subunits assemble into 2 heptameric rings which stack back to back to give a disk-like structure with a central cavity, resembling the structure of eukaryotic proteasomes.

It localises to the cytoplasm. The enzyme catalyses Hydrolysis of proteins to small peptides in the presence of ATP and magnesium. alpha-casein is the usual test substrate. In the absence of ATP, only oligopeptides shorter than five residues are hydrolyzed (such as succinyl-Leu-Tyr-|-NHMec, and Leu-Tyr-Leu-|-Tyr-Trp, in which cleavage of the -Tyr-|-Leu- and -Tyr-|-Trp bonds also occurs).. In terms of biological role, cleaves peptides in various proteins in a process that requires ATP hydrolysis. Has a chymotrypsin-like activity. Plays a major role in the degradation of misfolded proteins. This is ATP-dependent Clp protease proteolytic subunit 1 from Synechococcus sp. (strain JA-2-3B'a(2-13)) (Cyanobacteria bacterium Yellowstone B-Prime).